Here is a 429-residue protein sequence, read N- to C-terminus: MSRSSDLFHKAQTIIPGGVNSPVRAFKGVGGEPVFFKSGKGAYLTDVDDKQYIDYVGSWGPLILGHCHPKVIEAVDNVLHRGMSFGAPTELEIQLAEKIASLMPSIEKIRMVNSGTEATMTAIRLARGFTNKNKFIKFNGCYHGHSDSLLVKAGSGLLTLGIPSTPGIPQSITEHTLTADFNNLEQVAQLFEKYPNDIATVILEPIPGNMGFILPKIEFLKGLRELCDQYNALLIFDEVMTGFRVGLHGAQGLFGIKPDITTLGKIIGGGMPVGALGGKREIMSFLAPEGPVYQAGTLSGNPLAMAAGLATLKEIEKINFFEDLSNTTNKLTEALADAAENANIPFFAASLGGMFGFCFTDKNSVENYLDVASSDEVLFKKFFHAMLAQGVYFAPSMYEAGFVSSMHGDLEIQKTYDAAELVLNQLKSA.

Residue Lys265 is modified to N6-(pyridoxal phosphate)lysine.

It belongs to the class-III pyridoxal-phosphate-dependent aminotransferase family. HemL subfamily. In terms of assembly, homodimer. The cofactor is pyridoxal 5'-phosphate.

It localises to the cytoplasm. The enzyme catalyses (S)-4-amino-5-oxopentanoate = 5-aminolevulinate. The protein operates within porphyrin-containing compound metabolism; protoporphyrin-IX biosynthesis; 5-aminolevulinate from L-glutamyl-tRNA(Glu): step 2/2. The polypeptide is Glutamate-1-semialdehyde 2,1-aminomutase (Legionella pneumophila subsp. pneumophila (strain Philadelphia 1 / ATCC 33152 / DSM 7513)).